Reading from the N-terminus, the 89-residue chain is DNA/RNA-binding protein Alba 1 (89 aa).

It belongs to the histone-like Alba family.

The protein localises to the cytoplasm. It is found in the chromosome. In terms of biological role, binds double-stranded DNA tightly but without sequence specificity. Involved in DNA compaction. The protein is DNA/RNA-binding protein Alba 1 of Archaeoglobus fulgidus (strain ATCC 49558 / DSM 4304 / JCM 9628 / NBRC 100126 / VC-16).